A 230-amino-acid chain; its full sequence is Ureidoacrylate amidohydrolase RutB (230 aa).

Aspartate 24 (proton acceptor) is an active-site residue. Lysine 133 is an active-site residue. Cysteine 166 (nucleophile) is an active-site residue.

The protein belongs to the isochorismatase family. RutB subfamily.

The catalysed reaction is (Z)-3-ureidoacrylate + H2O + H(+) = (Z)-3-aminoacrylate + NH4(+) + CO2. The enzyme catalyses (Z)-3-ureidoacrylate + H2O = (Z)-3-aminoacrylate + carbamate + H(+). It catalyses the reaction (Z)-2-methylureidoacrylate + H2O + H(+) = (Z)-2-methylaminoacrylate + NH4(+) + CO2. Hydrolyzes ureidoacrylate to form aminoacrylate and carbamate. The carbamate hydrolyzes spontaneously, thereby releasing one of the nitrogen atoms of the pyrimidine ring as ammonia and one of its carbon atoms as CO2. The protein is Ureidoacrylate amidohydrolase RutB of Escherichia coli (strain K12 / MC4100 / BW2952).